Consider the following 288-residue polypeptide: L-xylulose reductase (288 aa).

Isoleucine 39, asparagine 113, and lysine 147 together coordinate NADP(+). Serine 181 acts as the Proton donor in catalysis. NADP(+) contacts are provided by tyrosine 196, lysine 200, isoleucine 228, and threonine 230. The active-site Proton acceptor is tyrosine 196. Lysine 200 acts as the Lowers pKa of active site Tyr in catalysis.

Belongs to the short-chain dehydrogenases/reductases (SDR) family.

The catalysed reaction is xylitol + NADP(+) = L-xylulose + NADPH + H(+). It functions in the pathway carbohydrate degradation; L-arabinose degradation via L-arabinitol; D-xylulose 5-phosphate from L-arabinose (fungal route): step 3/5. Its function is as follows. L-xylulose reductase involved in the catabolism of L-arabinose through an oxidoreductive pathway. Catalyzes the NADPH-dependent reduction of L-xylulose. Is also able to convert D-xylulose, D-ribulose, L-sorbose, and D-fructose to their corresponding polyols. This chain is L-xylulose reductase, found in Hypocrea jecorina (strain QM6a) (Trichoderma reesei).